Consider the following 317-residue polypeptide: uncharacterized protein (317 aa).

A run of 7 helical transmembrane segments spans residues 24-44, 63-83, 136-156, 187-207, 229-249, 252-272, and 295-315; these read ISIIVLTTVFIVNYIMSTGIM, LSISSTLACFFSPTVGYSILA, LGVALAKTIIGFLYLSIISED, LIPIMFFMMTLVLYLSKIGFF, ILALTEIMNVQAAIVMAGGFL, GILSSKEVLIGLIIGNVLTFS, and IVMVNAAITLLLDIFIIAGLL.

This sequence to M.jannaschii MJ0880, MJ1556 and MJ1589.

The protein resides in the cell membrane. This is an uncharacterized protein from Methanocaldococcus jannaschii (strain ATCC 43067 / DSM 2661 / JAL-1 / JCM 10045 / NBRC 100440) (Methanococcus jannaschii).